Reading from the N-terminus, the 352-residue chain is Divinyl chlorophyll a/b light-harvesting protein PcbH (352 aa).

Helical transmembrane passes span 27 to 47 (FIGS…ASCL), 88 to 108 (VATI…AGLA), 140 to 160 (FILG…VEWA), 202 to 222 (VMSG…FHIA), 242 to 262 (AVLS…AFWA), and 309 to 329 (LVNV…WHAL).

The protein belongs to the PsbB/PsbC family. IsiA/Pcb subfamily. In terms of assembly, the antenna complex consists of divinyl chlorophylls (a and b) and divinyl chlorophyll a/b binding proteins and binds more divinyl chlorophyll b than does the antenna complex from high-light-adapted Prochlorococcus. Divinyl chlorophyll a serves as cofactor. The cofactor is divinyl chlorophyll b.

It is found in the cellular thylakoid membrane. The antenna complex functions as a light receptor, it captures and delivers excitation energy to photosystems II and I. The Prochlorales pcb genes are not related to higher plant LHCs. The polypeptide is Divinyl chlorophyll a/b light-harvesting protein PcbH (pcbH) (Prochlorococcus marinus (strain SARG / CCMP1375 / SS120)).